We begin with the raw amino-acid sequence, 385 residues long: uncharacterized protein (385 aa).

This sequence belongs to the peptidase M20 family.

This is an uncharacterized protein from Staphylococcus saprophyticus subsp. saprophyticus (strain ATCC 15305 / DSM 20229 / NCIMB 8711 / NCTC 7292 / S-41).